The sequence spans 607 residues: Glutamine--fructose-6-phosphate aminotransferase [isomerizing] (607 aa).

Cys-2 acts as the Nucleophile; for GATase activity in catalysis. Positions 2–217 (CGIIGIIGND…DGDWAVLTRN (216 aa)) constitute a Glutamine amidotransferase type-2 domain. SIS domains follow at residues 283–422 (IGID…ARGA) and 455–597 (VCHD…VDQP). The active-site For Fru-6P isomerization activity is the Lys-602.

In terms of assembly, homodimer.

It is found in the cytoplasm. The enzyme catalyses D-fructose 6-phosphate + L-glutamine = D-glucosamine 6-phosphate + L-glutamate. In terms of biological role, catalyzes the first step in hexosamine metabolism, converting fructose-6P into glucosamine-6P using glutamine as a nitrogen source. The sequence is that of Glutamine--fructose-6-phosphate aminotransferase [isomerizing] from Brucella abortus biovar 1 (strain 9-941).